The chain runs to 561 residues: Dihydroxy-acid dehydratase (561 aa).

Cysteine 50 contacts [2Fe-2S] cluster. A Mg(2+)-binding site is contributed by aspartate 82. Cysteine 123 contributes to the [2Fe-2S] cluster binding site. Mg(2+)-binding residues include aspartate 124 and lysine 125. Position 125 is an N6-carboxylysine (lysine 125). Cysteine 195 contributes to the [2Fe-2S] cluster binding site. Residue glutamate 447 participates in Mg(2+) binding. The active-site Proton acceptor is serine 473.

It belongs to the IlvD/Edd family. As to quaternary structure, homodimer. [2Fe-2S] cluster is required as a cofactor. Mg(2+) serves as cofactor.

It catalyses the reaction (2R)-2,3-dihydroxy-3-methylbutanoate = 3-methyl-2-oxobutanoate + H2O. The catalysed reaction is (2R,3R)-2,3-dihydroxy-3-methylpentanoate = (S)-3-methyl-2-oxopentanoate + H2O. The protein operates within amino-acid biosynthesis; L-isoleucine biosynthesis; L-isoleucine from 2-oxobutanoate: step 3/4. It functions in the pathway amino-acid biosynthesis; L-valine biosynthesis; L-valine from pyruvate: step 3/4. Its function is as follows. Functions in the biosynthesis of branched-chain amino acids. Catalyzes the dehydration of (2R,3R)-2,3-dihydroxy-3-methylpentanoate (2,3-dihydroxy-3-methylvalerate) into 2-oxo-3-methylpentanoate (2-oxo-3-methylvalerate) and of (2R)-2,3-dihydroxy-3-methylbutanoate (2,3-dihydroxyisovalerate) into 2-oxo-3-methylbutanoate (2-oxoisovalerate), the penultimate precursor to L-isoleucine and L-valine, respectively. The chain is Dihydroxy-acid dehydratase from Trichodesmium erythraeum (strain IMS101).